We begin with the raw amino-acid sequence, 231 residues long: MFVWHEYENAAEAAQSLADAVADALQGALDEKGGAVLAVSGGRSPIAFFNALSQKDLDWKNVGITLADERIVPTVHADSNTGLVREYLLKNKAEAAMWIPMVEDGKTETELHPDAVVDYALKHYKQPDVLVLGMGNDGHTASIFPKAPQFQTAIDGSAGVALVHTTPVTAPHERVSMTLDAIAHTGHVFLAIRGEEKKAVFDQAAQGENREYPINLVLNHQGVNCHVFYAE.

Belongs to the glucosamine/galactosamine-6-phosphate isomerase family. 6-phosphogluconolactonase subfamily.

The catalysed reaction is 6-phospho-D-glucono-1,5-lactone + H2O = 6-phospho-D-gluconate + H(+). Its pathway is carbohydrate degradation; pentose phosphate pathway; D-ribulose 5-phosphate from D-glucose 6-phosphate (oxidative stage): step 2/3. In terms of biological role, hydrolysis of 6-phosphogluconolactone to 6-phosphogluconate. The chain is 6-phosphogluconolactonase (pgl) from Neisseria meningitidis serogroup A / serotype 4A (strain DSM 15465 / Z2491).